The chain runs to 105 residues: UPF0235 protein CT1832 (105 aa).

This sequence belongs to the UPF0235 family.

The chain is UPF0235 protein CT1832 from Chlorobaculum tepidum (strain ATCC 49652 / DSM 12025 / NBRC 103806 / TLS) (Chlorobium tepidum).